The chain runs to 643 residues: Pescadillo homolog (643 aa).

Positions 305 to 323 are enriched in basic and acidic residues; the sequence is EKTKEKNHKSDNNPHEHTT. Positions 305-329 are disordered; it reads EKTKEKNHKSDNNPHEHTTNIDNNN. The 97-residue stretch at 378–474 folds into the BRCT domain; that stretch reads KLKELFKNHI…NILPCSDYLT (97 aa). Positions 531–615 form a coiled coil; sequence NYKEEEEEEN…IVLSKKKRKL (85 aa).

It belongs to the pescadillo family. As to quaternary structure, interacts with dual specificity protein phosphatase YVH1.

It localises to the nucleus. It is found in the nucleolus. The protein resides in the nucleoplasm. Its function is as follows. Required for maturation of ribosomal RNAs and formation of the large ribosomal subunit. This chain is Pescadillo homolog, found in Plasmodium falciparum (isolate 3D7).